A 94-amino-acid chain; its full sequence is Integration host factor subunit beta (94 aa).

Belongs to the bacterial histone-like protein family. In terms of assembly, heterodimer of an alpha and a beta chain.

Functionally, this protein is one of the two subunits of integration host factor, a specific DNA-binding protein that functions in genetic recombination as well as in transcriptional and translational control. This Brucella anthropi (strain ATCC 49188 / DSM 6882 / CCUG 24695 / JCM 21032 / LMG 3331 / NBRC 15819 / NCTC 12168 / Alc 37) (Ochrobactrum anthropi) protein is Integration host factor subunit beta.